Reading from the N-terminus, the 242-residue chain is Ubiquinone biosynthesis O-methyltransferase (242 aa).

Residues Arg-44, Gly-64, Asp-85, and Met-129 each contribute to the S-adenosyl-L-methionine site.

Belongs to the methyltransferase superfamily. UbiG/COQ3 family.

It carries out the reaction a 3-demethylubiquinol + S-adenosyl-L-methionine = a ubiquinol + S-adenosyl-L-homocysteine + H(+). The catalysed reaction is a 3-(all-trans-polyprenyl)benzene-1,2-diol + S-adenosyl-L-methionine = a 2-methoxy-6-(all-trans-polyprenyl)phenol + S-adenosyl-L-homocysteine + H(+). Its pathway is cofactor biosynthesis; ubiquinone biosynthesis. O-methyltransferase that catalyzes the 2 O-methylation steps in the ubiquinone biosynthetic pathway. The polypeptide is Ubiquinone biosynthesis O-methyltransferase (Salmonella agona (strain SL483)).